The sequence spans 412 residues: Alpha-1-antiproteinase (412 aa).

The N-terminal stretch at 1–24 is a signal peptide; that stretch reads MPSSISWGLLLLAGLCCLAPGSLA. Residue Ser-33 is modified to Phosphoserine. 4 N-linked (GlcNAc...) asparagine glycosylation sites follow: Asn-65, Asn-102, Asn-165, and Asn-266. The segment at 368 to 387 is RCL; the sequence is GVTVLEAIPMSLPPDVRFDR. Residue Ser-378 is modified to Phosphoserine.

The protein belongs to the serpin family. Interacts with CELA2A. Interacts with ERGIC3 and LMAN1/ERGIC53. Interacts with PRSS1/Trypsin. In terms of tissue distribution, plasma.

The protein localises to the secreted. In terms of biological role, inhibitor of serine proteases. This chain is Alpha-1-antiproteinase, found in Callosciurus caniceps (Gray-bellied squirrel).